The following is a 404-amino-acid chain: Nicotinate phosphoribosyltransferase (404 aa).

Histidine 225 bears the Phosphohistidine; by autocatalysis mark.

It belongs to the NAPRTase family. Post-translationally, transiently phosphorylated on a His residue during the reaction cycle. Phosphorylation strongly increases the affinity for substrates and increases the rate of nicotinate D-ribonucleotide production. Dephosphorylation regenerates the low-affinity form of the enzyme, leading to product release.

It carries out the reaction nicotinate + 5-phospho-alpha-D-ribose 1-diphosphate + ATP + H2O = nicotinate beta-D-ribonucleotide + ADP + phosphate + diphosphate. Its pathway is cofactor biosynthesis; NAD(+) biosynthesis; nicotinate D-ribonucleotide from nicotinate: step 1/1. Its function is as follows. Catalyzes the synthesis of beta-nicotinate D-ribonucleotide from nicotinate and 5-phospho-D-ribose 1-phosphate at the expense of ATP. This Acinetobacter baumannii (strain ATCC 17978 / DSM 105126 / CIP 53.77 / LMG 1025 / NCDC KC755 / 5377) protein is Nicotinate phosphoribosyltransferase.